The primary structure comprises 261 residues: MTMQVDPSANSSAASSAAPGTTVDRAEIEKFSKLSQEWWDPTGKMAPLHRINPLRLQFIRDAACRKFDRNARSLNCLAGLRLLDIGCGAGLLCEPFTRLGAQVIGVDPSASNIAAAKLHAEKAHLSIDYRCTTVEDMDVRERFDIILAMEVVEHVADVGLFLDRCAAMLKPGGMMAASTLNRNWKSFALGIVAAEYVLRWLPRGTHQWDKFVTPDELARHFERNGLGITEQSGVVYSPFGDRWSLSSDMDVNYMVVAEAVG.

A disordered region spans residues 1 to 22 (MTMQVDPSANSSAASSAAPGTT). Positions 8–18 (SANSSAASSAA) are enriched in low complexity. Residues Arg55, Gly86, Asp107, and Met149 each coordinate S-adenosyl-L-methionine.

Belongs to the methyltransferase superfamily. UbiG/COQ3 family.

It carries out the reaction a 3-demethylubiquinol + S-adenosyl-L-methionine = a ubiquinol + S-adenosyl-L-homocysteine + H(+). The catalysed reaction is a 3-(all-trans-polyprenyl)benzene-1,2-diol + S-adenosyl-L-methionine = a 2-methoxy-6-(all-trans-polyprenyl)phenol + S-adenosyl-L-homocysteine + H(+). It functions in the pathway cofactor biosynthesis; ubiquinone biosynthesis. Its function is as follows. O-methyltransferase that catalyzes the 2 O-methylation steps in the ubiquinone biosynthetic pathway. The protein is Ubiquinone biosynthesis O-methyltransferase of Nitrobacter winogradskyi (strain ATCC 25391 / DSM 10237 / CIP 104748 / NCIMB 11846 / Nb-255).